The primary structure comprises 208 residues: Large ribosomal subunit protein uL3 (208 aa).

The tract at residues 117–149 (GFQGAIKRHGQSRGPMAHGSRYHRRPGSMGPVA) is disordered.

Belongs to the universal ribosomal protein uL3 family. Part of the 50S ribosomal subunit. Forms a cluster with proteins L14 and L19.

Functionally, one of the primary rRNA binding proteins, it binds directly near the 3'-end of the 23S rRNA, where it nucleates assembly of the 50S subunit. The sequence is that of Large ribosomal subunit protein uL3 from Exiguobacterium sp. (strain ATCC BAA-1283 / AT1b).